We begin with the raw amino-acid sequence, 334 residues long: Siroheme decarboxylase (334 aa).

Residue H93 is part of the active site.

It belongs to the Ahb/Nir family.

The catalysed reaction is siroheme + 2 H(+) = 12,18-didecarboxysiroheme + 2 CO2. Its pathway is porphyrin-containing compound metabolism. Functionally, involved in heme d1 biosynthesis. Catalyzes the decarboxylation of siroheme into didecarboxysiroheme. Siroheme is probably decarboxylated to monodecarboxysiroheme, which is in turn decarboxylated to didecarboxysiroheme. The sequence is that of Siroheme decarboxylase from Hydrogenobacter thermophilus (strain DSM 6534 / IAM 12695 / TK-6).